The sequence spans 740 residues: Melanoma-associated antigen D4 (740 aa).

The span at 1–11 (MAEGSYRKESE) shows a compositional bias: basic and acidic residues. Disordered stretches follow at residues 1 to 27 (MAEG…EVGE), 139 to 208 (ATHQ…GPST), 242 to 298 (PAGV…ALAK), and 321 to 377 (IPEP…ASQP). Acidic residues predominate over residues 14–27 (NVEDMDEGSDEVGE). Polar residues-rich tracts occupy residues 141–155 (HQAS…TSAA) and 162–175 (PETS…SRML). The segment covering 185-207 (APARSPQPQTSSQAQEAAAEGPS) has biased composition (low complexity). Low complexity predominate over residues 321–337 (IPEPESAAATSQQSAEP). Positions 354 to 363 (DEYESGEEER) are enriched in acidic residues. In terms of domain architecture, MAGE spans 414-612 (LQERANKLVK…REWRAHFLEA (199 aa)). A disordered region spans residues 697 to 722 (WRAGVSSGTNGAASASMLDGPSTSST).

In terms of assembly, interacts with TRIM27.

In terms of biological role, may enhance ubiquitin ligase activity of RING-type zinc finger-containing E3 ubiquitin-protein ligases. Proposed to act through recruitment and/or stabilization of the Ubl-conjugating enzyme (E2) at the E3:substrate complex. This is Melanoma-associated antigen D4 (MAGED4) from Bos taurus (Bovine).